The chain runs to 293 residues: MAVSLNDIKNKIASTKNTSQITNAMQMVSAAKLGKSEEAAKNFQVYAQKVRKLVTDMLHGHEAENARHHSMLISRPVKKSAYIVITSDRGLVGGYNATILKALMELKAEYHPTGEDFEVICIGSVGADFFRARGIQPVYELRGLADQPSFDEVRKIISKTIEMYQNELFDELYVCYNHHVNSLTSQMRVEQMLPIIDLDPNEADEDYTLNLELESSRDSILDQLLPQFAESMIYGAIIDAKTAENAAGMTAMQTATDNAKKVISDLTIQYNRARQAAITQEITEIVAGASALE.

The protein belongs to the ATPase gamma chain family. F-type ATPases have 2 components, CF(1) - the catalytic core - and CF(0) - the membrane proton channel. CF(1) has five subunits: alpha(3), beta(3), gamma(1), delta(1), epsilon(1). CF(0) has three main subunits: a, b and c.

It localises to the cell membrane. Functionally, produces ATP from ADP in the presence of a proton gradient across the membrane. The gamma chain is believed to be important in regulating ATPase activity and the flow of protons through the CF(0) complex. The chain is ATP synthase gamma chain from Streptococcus sanguinis.